The chain runs to 1400 residues: DNA-directed RNA polymerase subunit beta' (1400 aa).

Zn(2+) contacts are provided by C70, C72, C85, and C88. Residues D460, D462, and D464 each coordinate Mg(2+). 4 residues coordinate Zn(2+): C814, C888, C895, and C898. The tract at residues D1367 to E1400 is disordered.

Belongs to the RNA polymerase beta' chain family. The RNAP catalytic core consists of 2 alpha, 1 beta, 1 beta' and 1 omega subunit. When a sigma factor is associated with the core the holoenzyme is formed, which can initiate transcription. Mg(2+) is required as a cofactor. Zn(2+) serves as cofactor.

It carries out the reaction RNA(n) + a ribonucleoside 5'-triphosphate = RNA(n+1) + diphosphate. DNA-dependent RNA polymerase catalyzes the transcription of DNA into RNA using the four ribonucleoside triphosphates as substrates. The protein is DNA-directed RNA polymerase subunit beta' of Vibrio campbellii (strain ATCC BAA-1116).